The chain runs to 217 residues: Outer-membrane lipoprotein LolB (217 aa).

Residues 1–20 (MSRAVRTLALGGLVLVGLSA) form the signal peptide. The N-palmitoyl cysteine moiety is linked to residue Cys21. The S-diacylglycerol cysteine moiety is linked to residue Cys21.

The protein belongs to the LolB family. Monomer.

Its subcellular location is the cell outer membrane. Its function is as follows. Plays a critical role in the incorporation of lipoproteins in the outer membrane after they are released by the LolA protein. The polypeptide is Outer-membrane lipoprotein LolB (Xanthomonas euvesicatoria pv. vesicatoria (strain 85-10) (Xanthomonas campestris pv. vesicatoria)).